We begin with the raw amino-acid sequence, 357 residues long: tRNA pseudouridine synthase B (357 aa).

The active-site Nucleophile is the Asp42.

Belongs to the pseudouridine synthase TruB family. Type 1 subfamily.

It carries out the reaction uridine(55) in tRNA = pseudouridine(55) in tRNA. Responsible for synthesis of pseudouridine from uracil-55 in the psi GC loop of transfer RNAs. The chain is tRNA pseudouridine synthase B from Treponema denticola (strain ATCC 35405 / DSM 14222 / CIP 103919 / JCM 8153 / KCTC 15104).